A 999-amino-acid chain; its full sequence is Cytoplasmic dynein 2 intermediate chain 1 (999 aa).

Basic and acidic residues-rich tracts occupy residues 1 to 19 (MEPG…DDLR), 29 to 138 (PKEE…EEIR), 146 to 260 (LLSR…EDRH), and 268 to 300 (GLHY…KELE). Residues 1–350 (MEPGKRRTKD…EHEAREKAEE (350 aa)) form a disordered region. Phosphoserine is present on S250. A compositionally biased stretch (acidic residues) spans 318–338 (LEDDFVDYEDDFEVCDGDDDS). Positions 339–350 (NNEHEAREKAEE) are enriched in basic and acidic residues. The binding to the DYNLT2B-DYNLT1/DYNLT3 dimer stretch occupies residues 416–495 (ASHRQKSRSQ…DIQTEDIETR (80 aa)). WD repeat units lie at residues 637-677 (ICES…RIHH), 718-764 (AYKK…KADI), 850-890 (VRPI…PIMQ), and 895-935 (TSGH…LGPV).

It belongs to the dynein light intermediate chain family. In terms of assembly, intermediate chain of the cytoplasmic dynein complex 2, a multisubunit complex, composed at least of eleven different proteins. The cytoplasmic dynein 2 complex consists of two catalytic heavy chains (HCs) and a number of non-catalytic subunits presented by intermediate chains (ICs), light intermediate chains (LICs) and light chains (LCs). Among them, a heavy chain (DYNC2H1), two intermediate chains (DYNC2I2 and DYNC2I1), a light intermediate chain (DYNC2LI1), and a light chain (DYNLT2B) are unique to the cytoplasmic dynein complex 2, but a subset of the light chains are also shared by dynein-1 and dynein-2 complexes. Interacts with DYNC2I2; their C-terminal domains each bind a copy of the heavy chain, and their extended N-terminal regions are held together by an array of light chain dimers. Interacts with DYNLT2B. Interacts (via the N-terminal half) with DYNLT2B-DYNLT1 dimer or with DYNLT2B-DYNLT3 dimer; this interaction is crucial for retrograde trafficking of ciliary proteins.

The protein resides in the cell projection. Its subcellular location is the cilium. It is found in the cytoplasm. The protein localises to the cytoskeleton. It localises to the microtubule organizing center. The protein resides in the centrosome. In terms of biological role, acts as one of several non-catalytic accessory components of the cytoplasmic dynein 2 complex (dynein-2 complex), a motor protein complex that drives the movement of cargos along microtubules within cilia and flagella in concert with the intraflagellar transport (IFT) system. DYNC2I1 plays a major role in retrograde ciliary protein trafficking in cilia and flagella. Also requires to maintain a functional transition zone. In Mus musculus (Mouse), this protein is Cytoplasmic dynein 2 intermediate chain 1 (Dync2i1).